A 291-amino-acid polypeptide reads, in one-letter code: MAEFTVPEVDYTRYSNYQLVVIPLIILAVALLIIASWYVLTGSPVTQGIAFTGGTEITVETDGATTTQIVEAFSVEPESVQAVPTANTYIVTFQSNGNSGVAVTDLTRQAEQAGFEVQSAYEVSPSFGATTQTLALGGVGVAFLGMSVLVFLMFRVFVPSIAVVVSAFSDIAISVALMNVLGIELSLGTVAALLMIIGYSVDSDILLNNHVLRRSGDFYESTYRAMRTGVTMTLTSIIAMSVMAAVATAFGIQLLAAIGTVLVFGLIADLMNTYLLNLSLLRWYKFKGVAR.

Helical transmembrane passes span Leu-19 to Val-39, Leu-134 to Phe-154, Val-156 to Ala-176, Leu-187 to Asn-209, Met-226 to Val-246, and Ala-256 to Leu-278.

The protein belongs to the SecD/SecF family. SecF subfamily. In terms of assembly, part of the protein translocation apparatus. Forms a complex with SecD.

Its subcellular location is the cell membrane. In terms of biological role, involved in protein export. The sequence is that of Protein-export membrane protein SecF from Haloquadratum walsbyi (strain DSM 16790 / HBSQ001).